The sequence spans 269 residues: MANYIVGDIQGCFDELMLLLAQCQFDKNVDTLWVAGDLVARGPKSLETLRFIKSLGDSAKVVLGNHDLHLIAVSLGIRNNKAKDKTAPIFASEDGNELLHWLRQQPLLAEHPKFVVCHAGISPQWDLATARLCAEEVESLLRSENYRWLIENMYCNQPDLWQDNLSGLDRYRYIINAFTRMRFCFADGRLDMDCKLPPSEVKESELMPWFTLPQRRALDKPVLFGHWAALEGYISEEVIGLDTGCVWNGSLTMIRWEDKQVFSQKALEN.

This sequence belongs to the Ap4A hydrolase family.

The catalysed reaction is P(1),P(4)-bis(5'-adenosyl) tetraphosphate + H2O = 2 ADP + 2 H(+). In terms of biological role, hydrolyzes diadenosine 5',5'''-P1,P4-tetraphosphate to yield ADP. This Vibrio vulnificus (strain YJ016) protein is Bis(5'-nucleosyl)-tetraphosphatase, symmetrical.